Reading from the N-terminus, the 339-residue chain is Ribonucleoside-diphosphate reductase subunit beta (339 aa).

Fe cation contacts are provided by Asp87 and His121. Tyr125 is an active-site residue. His215 contacts Fe cation.

It belongs to the ribonucleoside diphosphate reductase small chain family. In terms of assembly, tetramer of two alpha and two beta subunits. The cofactor is Fe cation.

It catalyses the reaction a 2'-deoxyribonucleoside 5'-diphosphate + [thioredoxin]-disulfide + H2O = a ribonucleoside 5'-diphosphate + [thioredoxin]-dithiol. Provides the precursors necessary for DNA synthesis. Catalyzes the biosynthesis of deoxyribonucleotides from the corresponding ribonucleotides. The sequence is that of Ribonucleoside-diphosphate reductase subunit beta (nrdF) from Mycoplasma pneumoniae (strain ATCC 29342 / M129 / Subtype 1) (Mycoplasmoides pneumoniae).